A 198-amino-acid chain; its full sequence is Protein GrpE (198 aa).

The protein belongs to the GrpE family. As to quaternary structure, homodimer.

It is found in the cytoplasm. Functionally, participates actively in the response to hyperosmotic and heat shock by preventing the aggregation of stress-denatured proteins, in association with DnaK and GrpE. It is the nucleotide exchange factor for DnaK and may function as a thermosensor. Unfolded proteins bind initially to DnaJ; upon interaction with the DnaJ-bound protein, DnaK hydrolyzes its bound ATP, resulting in the formation of a stable complex. GrpE releases ADP from DnaK; ATP binding to DnaK triggers the release of the substrate protein, thus completing the reaction cycle. Several rounds of ATP-dependent interactions between DnaJ, DnaK and GrpE are required for fully efficient folding. The polypeptide is Protein GrpE (Vibrio harveyi (Beneckea harveyi)).